The primary structure comprises 546 residues: Chaperonin GroEL (546 aa).

Residues 29–32 (TLGP), lysine 50, 86–90 (DGTTT), glycine 414, 478–480 (NAA), and aspartate 494 each bind ATP.

This sequence belongs to the chaperonin (HSP60) family. As to quaternary structure, forms a cylinder of 14 subunits composed of two heptameric rings stacked back-to-back. Interacts with the co-chaperonin GroES.

It is found in the cytoplasm. It catalyses the reaction ATP + H2O + a folded polypeptide = ADP + phosphate + an unfolded polypeptide.. Functionally, together with its co-chaperonin GroES, plays an essential role in assisting protein folding. The GroEL-GroES system forms a nano-cage that allows encapsulation of the non-native substrate proteins and provides a physical environment optimized to promote and accelerate protein folding. The protein is Chaperonin GroEL of Psychrobacter arcticus (strain DSM 17307 / VKM B-2377 / 273-4).